Reading from the N-terminus, the 356-residue chain is MKKIVFTGGGTVGHVTLNLLLIPKFIKEGWQVHYVGDKHGIEYQEIQKSGLDVTFHSVATGKLRRYFSWQNLLDGFKVVWGIFQSLGIMLKVRPQALFSKGGFVSVPPVIAARLSGVPVYVHESDLSIGLANKIAYKCATKMYATFEQPSSLNKIEHVGAVTKVGSQESVLPQELEEIRQYFDKELPTLLFVGGSAGAKVFNDFVSQNQAALTERYNVINLTGDASLDVLSERLFRRAYVTDLYQPLMDLADVVVTRGGSNTIFELLAMAKLHIIVPLGREASRGDQIENADYFVKKGYAKQLAEEQLDMSHLQAALDDLLANQASYHQAMKNSQEIKSVDEFYALLKADIDKGKK.

2 residues coordinate UDP-N-acetyl-alpha-D-glucosamine: Ser195 and Gln287.

Belongs to the glycosyltransferase 28 family. MurG subfamily.

Its subcellular location is the cell membrane. It carries out the reaction Mur2Ac(oyl-L-Ala-gamma-D-Glu-L-Lys-D-Ala-D-Ala)-di-trans,octa-cis-undecaprenyl diphosphate + UDP-N-acetyl-alpha-D-glucosamine = beta-D-GlcNAc-(1-&gt;4)-Mur2Ac(oyl-L-Ala-gamma-D-Glu-L-Lys-D-Ala-D-Ala)-di-trans,octa-cis-undecaprenyl diphosphate + UDP + H(+). It functions in the pathway cell wall biogenesis; peptidoglycan biosynthesis. Its function is as follows. Cell wall formation. Catalyzes the transfer of a GlcNAc subunit on undecaprenyl-pyrophosphoryl-MurNAc-pentapeptide (lipid intermediate I) to form undecaprenyl-pyrophosphoryl-MurNAc-(pentapeptide)GlcNAc (lipid intermediate II). The protein is UDP-N-acetylglucosamine--N-acetylmuramyl-(pentapeptide) pyrophosphoryl-undecaprenol N-acetylglucosamine transferase of Streptococcus sanguinis (strain SK36).